Reading from the N-terminus, the 1192-residue chain is Probable phospholipid-transporting ATPase IM (1192 aa).

The Cytoplasmic segment spans residues 1–44 (MFCSEKKLREVERIVKANDREYNEKFQYADNRIHTSKYNILTFL). A helical transmembrane segment spans residues 45 to 66 (PINLFEQFQRVANAYFLCLLIL). Residues 67–72 (QLIPEI) are Exoplasmic loop-facing. The chain crosses the membrane as a helical span at residues 73–92 (SSLTWFTTIVPLVLVITMTA). Residues 93–276 (VKDATDDYFR…TSIDRLMNTL (184 aa)) are Cytoplasmic-facing. Residues 277–298 (VLWIFGFLICLGIILAIGNSIW) traverse the membrane as a helical segment. The Exoplasmic loop segment spans residues 299–327 (ESQTGDQFRTFLFWNEGEKSSVFSGFLTF). Residues 328–349 (WSYIIILNTVVPISLYVSVEVI) form a helical membrane-spanning segment. Topologically, residues 350–871 (RLGHSYFINW…GRWSYFRMCK (522 aa)) are cytoplasmic. Catalysis depends on D392, which acts as the 4-aspartylphosphate intermediate. Residues D392, K393, T394, E496, F537, K560, R594, T674, G675, D676, R789, and K795 each coordinate ATP. Position 392 (D392) interacts with Mg(2+). T394 contacts Mg(2+). D815 provides a ligand contact to Mg(2+). ATP contacts are provided by N818 and D819. D819 serves as a coordination point for Mg(2+). The helical transmembrane segment at 872–892 (FLCYFFYKNFAFTLVHFWFGF) threads the bilayer. The Exoplasmic loop portion of the chain corresponds to 893 to 904 (FCGFSAQTVYDQ). Residues 905 to 924 (WFITLFNIVYTSLPVLAMGI) form a helical membrane-spanning segment. Topologically, residues 925-954 (FDQDVSDQNSVDCPQLYKPGQLNLLFNKRK) are cytoplasmic. The helical transmembrane segment at 955-976 (FFICVLHGIYTSLVLFFIPYGA) threads the bilayer. Topologically, residues 977–990 (FYNVAGEDGQHIAD) are exoplasmic loop. The helical transmembrane segment at 991–1013 (YQSFAVTMATSLVIVVSVQIALD) threads the bilayer. Over 1014-1019 (TSYWTF) the chain is Cytoplasmic. Residues 1020 to 1040 (INHVFIWGSIAIYFSILFTMH) traverse the membrane as a helical segment. The Exoplasmic loop segment spans residues 1041-1060 (SNGIFGIFPNQFPFVGNARH). A helical transmembrane segment spans residues 1061–1085 (SLTQKCIWLVILLTTVASVMPVVAF). Residues 1086 to 1192 (RFLKVDLYPT…SFSQDKTVKL (107 aa)) lie on the Cytoplasmic side of the membrane. A compositionally biased stretch (basic residues) spans 1104–1125 (QKAQKKARPPSSRRPRTRRSSS). Disordered regions lie at residues 1104-1130 (QKAQKKARPPSSRRPRTRRSSSRRSGY) and 1143-1163 (TSGKNMRAKNPPPTSGLEKTH).

Belongs to the cation transport ATPase (P-type) (TC 3.A.3) family. Type IV subfamily. As to quaternary structure, component of a P4-ATPase flippase complex which consists of a catalytic alpha subunit and an accessory beta subunit. Interacts with beta subunits TMEM30A and TMEM30B. Requires Mg(2+) as cofactor. As to expression, ubiquitously expressed at moderate levels.

It localises to the cell membrane. It is found in the golgi apparatus. The catalysed reaction is ATP + H2O + phospholipidSide 1 = ADP + phosphate + phospholipidSide 2.. Component of a P4-ATPase flippase complex which catalyzes the hydrolysis of ATP coupled to the transport of aminophospholipids from the outer to the inner leaflet of various membranes and ensures the maintenance of asymmetric distribution of phospholipids. Phospholipid translocation also seems to be implicated in vesicle formation and in uptake of lipid signaling molecules. In Homo sapiens (Human), this protein is Probable phospholipid-transporting ATPase IM (ATP8B4).